A 1721-amino-acid chain; its full sequence is Ras guanine nucleotide exchange factor R (1721 aa).

The stretch at 148–279 (QLEDEVDLVH…LQQQQQQQRS (132 aa)) forms a coiled coil. 6 disordered regions span residues 213–232 (QQQK…KEEK), 445–515 (SSLG…NQQP), 551–701 (ATTT…VDKQ), 716–766 (RTPL…KSPS), 797–837 (TITI…TPNK), and 929–981 (DEVS…DPVS). Residues 216–232 (KHQEEKEKNDQKEKEEK) show a composition bias toward basic and acidic residues. Low complexity-rich tracts occupy residues 454–469 (SPEK…STSE), 479–493 (HNNN…STNN), 501–515 (PSLS…NQQP), and 551–581 (ATTT…LSIS). The span at 618–627 (NGTTSPRNNE) shows a compositional bias: polar residues. Low complexity-rich tracts occupy residues 628-651 (SSVT…VNTI) and 663-686 (TPTT…SQND). The segment covering 687–701 (KQNENNNKENFVDKQ) has biased composition (basic and acidic residues). Low complexity-rich tracts occupy residues 724–748 (SSNS…TNSS), 797–836 (TITI…TTPN), and 933–952 (ESSS…NTPS). Residues 802–831 (NNNNNNNNNNNNNNNNNNNIQQQQQQQQQI) are a coiled coil. A compositionally biased stretch (polar residues) spans 968-978 (NLSSINNSSYD). Positions 1291–1411 (GRYVPKAGTL…ILGGLIKKKE (121 aa)) constitute an N-terminal Ras-GEF domain. The Ras-GEF domain occupies 1447-1676 (NESEIARQLT…YQLSLIREPR (230 aa)).

In terms of processing, phosphorylated on threonine residues.

Promotes the exchange of Ras-bound GDP by GTP. May also play a role in the activation of rasG. In Dictyostelium discoideum (Social amoeba), this protein is Ras guanine nucleotide exchange factor R (gefR).